A 318-amino-acid chain; its full sequence is Mechanosensory protein 3 (318 aa).

LIM zinc-binding domains lie at 27-86 (NKCY…DYSA) and 87-152 (HRCA…PMDD). A DNA-binding region (homeobox) is located at residues 214–273 (RRGPRTTIRQNQLDVLNEMFSNTPKPSKHARAKLALETGLSMRVIQVWFQNRRSKERRLK).

The protein localises to the nucleus. Specifies differentiation of the set of six touch receptor neurons. Binds cooperatively as a heterodimer with unc-86 to sites in the mec-3 gene promoter. The chain is Mechanosensory protein 3 (mec-3) from Caenorhabditis briggsae.